The following is a 125-amino-acid chain: Meiotically up-regulated gene 112 protein (125 aa).

The protein localises to the golgi apparatus. Has a role in meiosis. This is Meiotically up-regulated gene 112 protein (mug112) from Schizosaccharomyces pombe (strain 972 / ATCC 24843) (Fission yeast).